We begin with the raw amino-acid sequence, 322 residues long: Transcription initiation factor IIB (322 aa).

Repeat copies occupy residues 125–213 and 224–305.

It belongs to the TFIIB family.

Stabilizes TBP binding to an archaeal box-A promoter. Also responsible for recruiting RNA polymerase II to the pre-initiation complex (DNA-TBP-TFIIB). The chain is Transcription initiation factor IIB from Aeropyrum pernix (strain ATCC 700893 / DSM 11879 / JCM 9820 / NBRC 100138 / K1).